Consider the following 535-residue polypeptide: T-complex protein 1 subunit beta (535 aa).

An N-acetylalanine modification is found at Ala-2. Ser-3 bears the Phosphoserine mark. At Lys-13 the chain carries N6-acetyllysine. An ADP-binding site is contributed by Gly-44. ATP is bound at residue Gly-44. Ser-60 carries the post-translational modification Phosphoserine. Position 97 (Asp-97) interacts with Mg(2+). 4 residues coordinate ADP: Gly-98, Thr-99, Thr-100, and Ser-101. Residues Gly-98, Thr-99, and Thr-100 each contribute to the ATP site. Position 154 is an N6-acetyllysine (Lys-154). Residues Ser-168 and Ser-169 each coordinate ADP. Residue Lys-181 is modified to N6-acetyllysine. Lys-248 participates in a covalent cross-link: Glycyl lysine isopeptide (Lys-Gly) (interchain with G-Cter in SUMO2). Ser-260 carries the phosphoserine modification. Phosphothreonine is present on Thr-261. Positions 410, 495, and 500 each coordinate ADP. ATP-binding residues include Glu-495 and Lys-500.

This sequence belongs to the TCP-1 chaperonin family. In terms of assembly, component of the chaperonin-containing T-complex (TRiC), a hexadecamer composed of two identical back-to-back stacked rings enclosing a protein folding chamber. Each ring is made up of eight different subunits: TCP1/CCT1, CCT2, CCT3, CCT4, CCT5, CCT6A/CCT6, CCT7, CCT8. Interacts with PACRG. Interacts with FLCN. Interacts with DLEC1. Interacts with SVEP1.

The protein resides in the cytoplasm. The enzyme catalyses ATP + H2O = ADP + phosphate + H(+). Functionally, component of the chaperonin-containing T-complex (TRiC), a molecular chaperone complex that assists the folding of actin, tubulin and other proteins upon ATP hydrolysis. The TRiC complex mediates the folding of WRAP53/TCAB1, thereby regulating telomere maintenance. As part of the TRiC complex may play a role in the assembly of BBSome, a complex involved in ciliogenesis regulating transports vesicles to the cilia. The chain is T-complex protein 1 subunit beta (CCT2) from Bos taurus (Bovine).